A 1005-amino-acid polypeptide reads, in one-letter code: Ephrin type-A receptor 5 (1005 aa).

A disordered region spans residues 1-24 (MRGSGPRGAGRRRTQGRGGGGDTP). A signal peptide spans 1–26 (MRGSGPRGAGRRRTQGRGGGGDTPRV). Topologically, residues 27–575 (PASLAGCYSA…GASNDQSQIP (549 aa)) are extracellular. Residues 62-240 (EVNLLDSRTV…YYKKCPSVVR (179 aa)) enclose the Eph LBD domain. N266, N301, N371, N425, N438, and N463 each carry an N-linked (GlcNAc...) asparagine glycan. Fibronectin type-III domains are found at residues 359–469 (PPSA…TNQA) and 470–564 (APSP…TTPV). The helical transmembrane segment at 576–596 (IIGVSVTVGVILLAVMIGFLL) threads the bilayer. At 597-1005 (SGSCCECGCG…MDAVAQVTLE (409 aa)) the chain is on the cytoplasmic side. A phosphotyrosine; by autocatalysis mark is found at Y652 and Y658. The 262-residue stretch at 677-938 (ITIERVIGAG…DIVNMLDKLI (262 aa)) folds into the Protein kinase domain. ATP contacts are provided by residues 683–691 (IGAGEFGEV) and K709. D802 (proton acceptor) is an active-site residue. Residues Y835 and Y984 each carry the phosphotyrosine; by autocatalysis modification. The SAM domain occupies 967 to 1005 (GAYRSVGEWLEATKMGRYTEIFMENGYSSMDAVAQVTLE).

It belongs to the protein kinase superfamily. Tyr protein kinase family. Ephrin receptor subfamily. As to quaternary structure, heterotetramer upon binding of the ligand. The heterotetramer is composed of an ephrin dimer and a receptor dimer. Oligomerization is probably required to induce biological responses. Interacts (via SAM domain) with SAMD5 (via SAM domain). In terms of processing, phosphorylated. Phosphorylation is stimulated by the ligand EFNA5. Dephosphorylation upon stimulation by glucose, inhibits EPHA5 forward signaling and results in insulin secretion. Almost exclusively expressed in the nervous system. Predominantly expressed in neurons.

It is found in the cell membrane. Its subcellular location is the cell projection. It localises to the axon. The protein localises to the dendrite. It carries out the reaction L-tyrosyl-[protein] + ATP = O-phospho-L-tyrosyl-[protein] + ADP + H(+). Receptor tyrosine kinase which binds promiscuously GPI-anchored ephrin-A family ligands residing on adjacent cells, leading to contact-dependent bidirectional signaling into neighboring cells. The signaling pathway downstream of the receptor is referred to as forward signaling while the signaling pathway downstream of the ephrin ligand is referred to as reverse signaling. Among GPI-anchored ephrin-A ligands, EFNA5 most probably constitutes the cognate/functional ligand for EPHA5. Functions as an axon guidance molecule during development and may be involved in the development of the retinotectal, entorhino-hippocampal and hippocamposeptal pathways. Together with EFNA5 plays also a role in synaptic plasticity in adult brain through regulation of synaptogenesis. In addition to its function in the nervous system, the interaction of EPHA5 with EFNA5 mediates communication between pancreatic islet cells to regulate glucose-stimulated insulin secretion. This is Ephrin type-A receptor 5 (Epha5) from Rattus norvegicus (Rat).